Here is a 943-residue protein sequence, read N- to C-terminus: Isoleucine--tRNA ligase (943 aa).

The 'HIGH' region signature appears at P58–H68. E567 lines the L-isoleucyl-5'-AMP pocket. Residues K608–S612 carry the 'KMSKS' region motif. K611 serves as a coordination point for ATP. C906, C909, C926, and C929 together coordinate Zn(2+).

It belongs to the class-I aminoacyl-tRNA synthetase family. IleS type 1 subfamily. Monomer. Zn(2+) is required as a cofactor.

Its subcellular location is the cytoplasm. The enzyme catalyses tRNA(Ile) + L-isoleucine + ATP = L-isoleucyl-tRNA(Ile) + AMP + diphosphate. Catalyzes the attachment of isoleucine to tRNA(Ile). As IleRS can inadvertently accommodate and process structurally similar amino acids such as valine, to avoid such errors it has two additional distinct tRNA(Ile)-dependent editing activities. One activity is designated as 'pretransfer' editing and involves the hydrolysis of activated Val-AMP. The other activity is designated 'posttransfer' editing and involves deacylation of mischarged Val-tRNA(Ile). This is Isoleucine--tRNA ligase from Pseudomonas paraeruginosa (strain DSM 24068 / PA7) (Pseudomonas aeruginosa (strain PA7)).